The primary structure comprises 181 residues: Early E3 20.3 kDa glycoprotein (181 aa).

N29, N57, N70, and N75 each carry an N-linked (GlcNAc...) asparagine; by host glycan.

Belongs to the adenoviridae E3_20 family.

Functionally, E3 proteins seem to be dispensable for virus growth in tissue culture cells. They are potentially important for virus growth under special conditions; E3 region may help adenoviruses to evade the immune surveillance of the host. This chain is Early E3 20.3 kDa glycoprotein, found in Homo sapiens (Human).